Here is a 672-residue protein sequence, read N- to C-terminus: MKNVAQHDVEKQIAELREQIEKHNYAYYVLDQPSISDAEYDELMRKLMELEEQYPQYKTPDSPSQRVGGAPLEAFRKVTHRVPMLSLSNAFNEGDLRDFDRRVRQEVGDVRYVCELKIDGLAVSLRYEDGYFVQGATRGDGTTGEDITENLKTIRSLPLRLRQQVTIEVRGEAYMPRKSFEKLNEKRKMNGEELFANPRNAAAGSLRQLDPKVAASRQLDIFAYHVVNAEELGILSHSAALNYLDELGFKTNPARQVCETIDDVLSYIEQWHERRASLPYDIDGIVIKVDAFAQQKQLGATAKSPRWAIAYKFPAEEVVTQLVDIELSVGRTGVVTPTAILQPVRVAGTIVQRASLHNEDYIREKDIRLGDYVVIKKAGDIIPEVVCSLPERRTGKEEPFDMPTHCPACASELVRLDDEVALRCVNPQCPAQIREGLIHFVSRQAMNIDGLGEKVIAQLFEHRLVRSVADLYTLTKDELVALERMGEKSATNLLQAIEASKQNSLERLLFGLGIRHVGAKAAKTLAEHFETMERLQQATKEELMAIHEIGEKMADSIVTYFSKEEVKQLLERLRAYGVNMTYKGAKQTIDISSTFAGKTFVLTGTLQSMSRSEAKEKIETLGGKVTGSVSKKTDVVVVGEDAGSKLEKAKQLGITIWDEARFLQEIQQSKQV.

NAD(+) is bound by residues 37–41 (DAEYD), 86–87 (SL), and Glu-115. The N6-AMP-lysine intermediate role is filled by Lys-117. Arg-138, Glu-172, Lys-288, and Lys-312 together coordinate NAD(+). 4 residues coordinate Zn(2+): Cys-406, Cys-409, Cys-424, and Cys-429. Residues 590-672 (DISSTFAGKT…LQEIQQSKQV (83 aa)) enclose the BRCT domain.

It belongs to the NAD-dependent DNA ligase family. LigA subfamily. It depends on Mg(2+) as a cofactor. Requires Mn(2+) as cofactor.

The catalysed reaction is NAD(+) + (deoxyribonucleotide)n-3'-hydroxyl + 5'-phospho-(deoxyribonucleotide)m = (deoxyribonucleotide)n+m + AMP + beta-nicotinamide D-nucleotide.. DNA ligase that catalyzes the formation of phosphodiester linkages between 5'-phosphoryl and 3'-hydroxyl groups in double-stranded DNA using NAD as a coenzyme and as the energy source for the reaction. It is essential for DNA replication and repair of damaged DNA. The polypeptide is DNA ligase (Anoxybacillus flavithermus (strain DSM 21510 / WK1)).